We begin with the raw amino-acid sequence, 103 residues long: Hexon-interlacing protein (103 aa).

Residues 72-99 (LDELKIQVAAMQNSVTAIQREVNDLKQR) are a coiled coil.

This sequence belongs to the adenoviridae hexon-interlacing protein family. As to quaternary structure, homotrimer. Interacts with hexon protein; this interaction tethers the hexons together. Self-interacts with adjacent proteins. Interacts with kinesin light chain KLC1; this interaction leads to capsid disruption at the nuclear pore complex during virus entry into host cell.

The protein localises to the virion. Its subcellular location is the host nucleus. Structural component of the virion that acts as a cement protein on the capsid exterior and forms triskelion structures consisting of three molecules that stabilize three hexon trimers at the center of each icosahedral facet and fixes the peripentonal hexons. Dispensable for assembly. During virus entry, recruits the anterograde motor kinesin-1 to the capsid docked at the nuclear pore complex thereby subjecting the docked capsid to a pulling force. The resulting tension leads to capsid disruption, dispersion of capsid fragments toward cell periphery and eventually viral DNA entry into the host nucleus. The chain is Hexon-interlacing protein from Canis lupus familiaris (Dog).